A 130-amino-acid chain; its full sequence is Glycoprotein hormone beta-5 (130 aa).

The signal sequence occupies residues 1-24; the sequence is MKLVYLVLGAVALLLLGGPDSVLS. 5 disulfides stabilise this stretch: Cys-36–Cys-84, Cys-50–Cys-99, Cys-60–Cys-115, Cys-64–Cys-117, and Cys-120–Cys-127. The N-linked (GlcNAc...) asparagine glycan is linked to Asn-87.

This sequence belongs to the glycoprotein hormones subunit beta family. As to quaternary structure, heterodimer with GPHA2; this heterodimer interacts with thyroid-stimulating hormone receptor (TSHR), and hence stimulates cAMP production. N-glycosylated. In terms of tissue distribution, expressed in the anterior lobe of pituitary.

The protein resides in the secreted. In terms of biological role, functions as a heterodimeric glycoprotein hormone with GPHA2 able to bind and activate the thyroid-stimulating hormone receptor (TSHR), leading to increased cAMP production. Plays a central role in controlling thyroid cell metabolism. The protein is Glycoprotein hormone beta-5 (Gphb5) of Mus musculus (Mouse).